Consider the following 30-residue polypeptide: Proteinase inhibitor CeKI (30 aa).

The protein belongs to the protease inhibitor I3 (leguminous Kunitz-type inhibitor) family.

In terms of biological role, potent inhibitor of serine proteases plasma kallikrein, plasmin and coagulation factor XIIa. Weak inhibitor of serine proteases trypsin and coagulation factor Xa. Does not inhibit the serine proteases chymotrypsin, elastase or thrombin. Inhibits kinin release from HMW-kininogen by kallikrein in vitro. This chain is Proteinase inhibitor CeKI, found in Paubrasilia echinata (Pau Brasil).